Reading from the N-terminus, the 427-residue chain is Trigger factor (427 aa).

The 86-residue stretch at 163 to 248 (GDTVVIDFVG…IHEVKAKEVP (86 aa)) folds into the PPIase FKBP-type domain.

The protein belongs to the FKBP-type PPIase family. Tig subfamily.

Its subcellular location is the cytoplasm. It catalyses the reaction [protein]-peptidylproline (omega=180) = [protein]-peptidylproline (omega=0). Involved in protein export. Acts as a chaperone by maintaining the newly synthesized protein in an open conformation. Functions as a peptidyl-prolyl cis-trans isomerase. The polypeptide is Trigger factor (Streptococcus pneumoniae serotype 4 (strain ATCC BAA-334 / TIGR4)).